A 375-amino-acid polypeptide reads, in one-letter code: uncharacterized protein (375 aa).

Residue Lys-99 forms an Isoglutamyl lysine isopeptide (Lys-Gln) (interchain with Q-Cter in protein Pup) linkage.

The protein belongs to the IMPDH/GMPR family.

This is an uncharacterized protein from Mycolicibacterium smegmatis (strain ATCC 700084 / mc(2)155) (Mycobacterium smegmatis).